The chain runs to 396 residues: Elongation factor Tu (396 aa).

A tr-type G domain is found at 10–206 (KPHCNIGTIG…AVDAYIPQPE (197 aa)). The segment at 19 to 26 (GHVDHGKT) is G1. 19 to 26 (GHVDHGKT) lines the GTP pocket. A Mg(2+)-binding site is contributed by T26. The interval 60–64 (GITIS) is G2. The interval 81 to 84 (DCPG) is G3. GTP is bound by residues 81 to 85 (DCPGH) and 136 to 139 (NKVD). The G4 stretch occupies residues 136–139 (NKVD). The interval 174–176 (SAL) is G5.

The protein belongs to the TRAFAC class translation factor GTPase superfamily. Classic translation factor GTPase family. EF-Tu/EF-1A subfamily. In terms of assembly, monomer.

It localises to the cytoplasm. The enzyme catalyses GTP + H2O = GDP + phosphate + H(+). Its function is as follows. GTP hydrolase that promotes the GTP-dependent binding of aminoacyl-tRNA to the A-site of ribosomes during protein biosynthesis. The chain is Elongation factor Tu from Gluconacetobacter diazotrophicus (strain ATCC 49037 / DSM 5601 / CCUG 37298 / CIP 103539 / LMG 7603 / PAl5).